A 66-amino-acid polypeptide reads, in one-letter code: uncharacterized protein (66 aa).

The helical transmembrane segment at 32–49 (WAFSLLIAGSAFLWIYMR) threads the bilayer.

It localises to the membrane. This is an uncharacterized protein from Bacillus subtilis (strain 168).